We begin with the raw amino-acid sequence, 111 residues long: Cytochrome c oxidase subunit 6A1, mitochondrial (111 aa).

A mitochondrion-targeting transit peptide spans M1 to M26. Topologically, residues S27–S36 are mitochondrial matrix. A helical membrane pass occupies residues A37 to L61. Residues K62–E111 lie on the Mitochondrial intermembrane side of the membrane.

This sequence belongs to the cytochrome c oxidase subunit 6A family. Component of the cytochrome c oxidase (complex IV, CIV), a multisubunit enzyme composed of 14 subunits. The complex is composed of a catalytic core of 3 subunits MT-CO1, MT-CO2 and MT-CO3, encoded in the mitochondrial DNA, and 11 supernumerary subunits COX4I, COX5A, COX5B, COX6A, COX6B, COX6C, COX7A, COX7B, COX7C, COX8 and NDUFA4, which are encoded in the nuclear genome. The complex exists as a monomer or a dimer and forms supercomplexes (SCs) in the inner mitochondrial membrane with NADH-ubiquinone oxidoreductase (complex I, CI) and ubiquinol-cytochrome c oxidoreductase (cytochrome b-c1 complex, complex III, CIII), resulting in different assemblies (supercomplex SCI(1)III(2)IV(1) and megacomplex MCI(2)III(2)IV(2)).

The protein resides in the mitochondrion inner membrane. The protein operates within energy metabolism; oxidative phosphorylation. In terms of biological role, component of the cytochrome c oxidase, the last enzyme in the mitochondrial electron transport chain which drives oxidative phosphorylation. The respiratory chain contains 3 multisubunit complexes succinate dehydrogenase (complex II, CII), ubiquinol-cytochrome c oxidoreductase (cytochrome b-c1 complex, complex III, CIII) and cytochrome c oxidase (complex IV, CIV), that cooperate to transfer electrons derived from NADH and succinate to molecular oxygen, creating an electrochemical gradient over the inner membrane that drives transmembrane transport and the ATP synthase. Cytochrome c oxidase is the component of the respiratory chain that catalyzes the reduction of oxygen to water. Electrons originating from reduced cytochrome c in the intermembrane space (IMS) are transferred via the dinuclear copper A center (CU(A)) of subunit 2 and heme A of subunit 1 to the active site in subunit 1, a binuclear center (BNC) formed by heme A3 and copper B (CU(B)). The BNC reduces molecular oxygen to 2 water molecules unsing 4 electrons from cytochrome c in the IMS and 4 protons from the mitochondrial matrix. The chain is Cytochrome c oxidase subunit 6A1, mitochondrial (Cox6a1) from Mus musculus (Mouse).